A 176-amino-acid chain; its full sequence is Interleukin-20 (176 aa).

Residues 1–24 (MKGFGLAFGLFSAVGFLLWTPLTG) form the signal peptide. Intrachain disulfides connect Cys33-Cys126, Cys80-Cys132, and Cys81-Cys134.

The protein belongs to the IL-10 family. As to quaternary structure, forms a 1:1:1 heterotrimeric complex with its primary high-affinity heterodimeric receptor IL20RA/IL20RB.

It localises to the secreted. Its function is as follows. Pro-inflammatory and angiogenic cytokine mainly secreted by monocytes and skin keratinocytes that plays crucial roles in immune responses, regulation of inflammatory responses, hemopoiesis, as well as epidermal cell and keratinocyte differentiation. Enhances tissue remodeling and wound-healing activities and restores the homeostasis of epithelial layers during infection and inflammatory responses to maintain tissue integrity. Affects multiple actin-mediated functions in activated neutrophils leading to inhibition of phagocytosis, granule exocytosis, and migration. Exert its effects via the type I IL-20 receptor complex consisting of IL20RA and IL20RB. Alternatively, can mediate its activity through a second receptor complex called type II IL-20 receptor complex composed of IL22RA1 and IL20RB. Acts as an arteriogenic and vascular remodeling factory by activating a range of signaling processes including phosphorylations of JAK2 and STAT5 as well as activation of the serine and threonine kinases AKT and ERK1/2. Alternatively, can activate STAT3 phosphorylation and transcriptional activity in a JAK2, ERK1/2 and p38 MAPK-dependent manner in keratinocytes. This chain is Interleukin-20 (Il20), found in Mus musculus (Mouse).